The sequence spans 132 residues: Small ribosomal subunit protein uS19 (132 aa).

It belongs to the universal ribosomal protein uS19 family.

Functionally, protein S19 forms a complex with S13 that binds strongly to the 16S ribosomal RNA. In Pyrococcus horikoshii (strain ATCC 700860 / DSM 12428 / JCM 9974 / NBRC 100139 / OT-3), this protein is Small ribosomal subunit protein uS19 (rps19).